We begin with the raw amino-acid sequence, 568 residues long: Potassium-transporting ATPase potassium-binding subunit (568 aa).

10 helical membrane passes run 3–23 (TEILGVVAQVALMVILAYPLG), 64–84 (FLKALLILNAFWFVWGMVLLV), 133–153 (FVIMLFQFITAATGMAAMAGI), 179–199 (ILLPLSLIVGFILILQGTPMG), 255–275 (MVECWSILIIPMAMVLALGFY), 281–301 (LAYSIFGVMLFAFLVGVCINV), 375–395 (FGGVGVGWMNYYTFIIIAVFI), 418–438 (IATIVALLHPFVILVFTAISS), 497–517 (IVLILSRFLPIIGQVAIAGLL), and 536–556 (TFGIMTFVVIFIVAALSFFPV).

This sequence belongs to the KdpA family. The system is composed of three essential subunits: KdpA, KdpB and KdpC.

It is found in the cell inner membrane. Part of the high-affinity ATP-driven potassium transport (or Kdp) system, which catalyzes the hydrolysis of ATP coupled with the electrogenic transport of potassium into the cytoplasm. This subunit binds the periplasmic potassium ions and delivers the ions to the membrane domain of KdpB through an intramembrane tunnel. The protein is Potassium-transporting ATPase potassium-binding subunit of Bacteroides thetaiotaomicron (strain ATCC 29148 / DSM 2079 / JCM 5827 / CCUG 10774 / NCTC 10582 / VPI-5482 / E50).